The primary structure comprises 323 residues: Fructose-1,6-bisphosphatase class 1 (323 aa).

Positions 88, 107, 109, and 110 each coordinate Mg(2+). Substrate is bound by residues 110 to 113 (DGSS) and asparagine 200. Mg(2+) is bound at residue glutamate 272.

Belongs to the FBPase class 1 family. As to quaternary structure, homotetramer. Mg(2+) serves as cofactor.

Its subcellular location is the cytoplasm. The catalysed reaction is beta-D-fructose 1,6-bisphosphate + H2O = beta-D-fructose 6-phosphate + phosphate. It participates in carbohydrate biosynthesis; gluconeogenesis. This chain is Fructose-1,6-bisphosphatase class 1, found in Acinetobacter baylyi (strain ATCC 33305 / BD413 / ADP1).